The chain runs to 527 residues: SusD-like protein P25 (527 aa).

Positions Met1 to Ser15 are cleaved as a signal peptide. Cys16 carries N-palmitoyl cysteine lipidation. Cys16 is lipidated: S-diacylglycerol cysteine.

It belongs to the SusD family.

It localises to the cell outer membrane. Polysaccharide-binding protein probably involved in ulvan degradation. Ulvan is the main polysaccharide component of the Ulvales (green seaweed) cell wall. It is composed of disaccharide building blocks comprising 3-sulfated rhamnose (Rha3S) linked to D-glucuronic acid (GlcA), L-iduronic acid (IduA), or D-xylose (Xyl). The SusD-like protein may mediate ulvan oligomer-binding before transport in the periplasm for further degradation. In Formosa agariphila (strain DSM 15362 / KCTC 12365 / LMG 23005 / KMM 3901 / M-2Alg 35-1), this protein is SusD-like protein P25.